The sequence spans 2797 residues: Nonribosomal peptide synthetase penN (2797 aa).

Positions S239–R625 are adenylation 1. The region spanning T751–T824 is the Carrier 1 domain. O-(pantetheine 4'-phosphoryl)serine is present on S785. Residues P830–Y856 are disordered. Residues Q870 to T1299 are condensation 1. Positions F1328–R1731 are adenylation 2. Residues L1857 to D1953 form a methyltransferase region. In terms of domain architecture, Carrier 2 spans S2277 to R2351. S2311 is subject to O-(pantetheine 4'-phosphoryl)serine. A condensation 2 region spans residues Y2516–L2658.

It belongs to the NRP synthetase family.

It carries out the reaction O-methyl-L-tyrosine + anthranilate + S-adenosyl-L-methionine + 2 ATP = (-)-4'-methoxycyclopeptine + 2 AMP + S-adenosyl-L-homocysteine + 2 diphosphate + 2 H(+). It catalyses the reaction anthranilate + L-phenylalanine + S-adenosyl-L-methionine + 2 ATP = cyclopeptine + 2 AMP + S-adenosyl-L-homocysteine + 2 diphosphate + 2 H(+). Its pathway is secondary metabolite biosynthesis. It participates in alkaloid biosynthesis. It functions in the pathway mycotoxin biosynthesis. Nonribosomal peptide synthetase; part of the gene cluster that mediates the biosynthesis of penigequinolones, potent insecticidal alkaloids that contain a highly modified 10-carbon prenyl group. The first stage is catalyzed by the nonribosomal peptide synthetase penN that condenses anthranilic acid and O-methyl-L-tyrosine to produce 4'-methoxycyclopeptin. 4'-methoxycyclopeptin is then converted to 4'-methoxydehydrocyclopeptin by the ketoglutarate-dependent dioxygenase penM through dehydrogenation to form a double bond between C-alpha and C-beta of the O-methyltyrosine side chain. PenM also converts its first product methoxydehydrocyclopeptin to 4'-methoxycyclopenin. The following conversion of 4'methoxycyclopenin into 4'-methoxyviridicatin is catalyzed by the cyclopenase penL. 4'-methoxyviridicatin is the precursor of quinolone natural products, and is further converted to quinolinone B. The prenyltransferase penI then catalyzes the canonical Friedel-Crafts alkylation of quinolinone B with dimethylallyl cation to yield dimethylallyl quinolone, which is subjected to FAD-dependent dehydrogenation by the FAD-linked oxidoreductase penH to yield conjugated aryl diene. The delta(3') double bond then serves as the site of the second alkylation with DMAPP catalyzed by the prenyltransferase penG to yield a carbenium ion intermediate, which can be attacked by H(2)O to yield a styrenyl quinolone containing a C3'-hydroxyprenyl chain, or undergo cyclization to yield yaequinolones J1 and J2. The conversion of the styrenyl quinolone into the tetrahydrofuran-containing yaequinolone C is performed by the FAD-dependent monooxygenase penE and involves epoxidation of the terminal C7'-C8' olefin, followed by epoxide ring opening initiated by the C3' hydroxyl group. The predicted cysteine hydrolase penJ acts as an epoxide hydrolase that enhances the rate of the 5-exo-tet cyclization step, increasing the yield of yaequinolone C. PenF catalyzes the cationic rearrangement of the epoxide formed by penE (before ring opening to produce yaequinolone C) into yaequinolone D. Finally, the short-chain dehydrogenase/reductase (SDR)-like reductase penD, catalyzes both the dehydration of yaequinolone D and the reduction of the resulting oxonium to yield penigequinolone. This chain is Nonribosomal peptide synthetase penN, found in Penicillium thymicola.